Here is a 113-residue protein sequence, read N- to C-terminus: Bactofilin BacN (113 aa).

This sequence belongs to the bactofilin family. Interacts with BacO and BacP, the 3 proteins colocalize as an extended structure.

It is found in the cytoplasm. The protein localises to the cytoskeleton. Functionally, a non-essential component of the chromosome segregation machinery. Positions the ParA-ParB-parS chromosome segregation machinery within the cell; BacP seems to be the most important bactofilin in this process. Forms a heteropolymeric, subpolar scaffold in the cell; BacP probably forms the core, BacO contributes to position and integrity while BacN does not seem to contribute to assembly. The sequence is that of Bactofilin BacN from Myxococcus xanthus (strain DK1622).